Reading from the N-terminus, the 328-residue chain is Dof zinc finger protein PBF (328 aa).

Positions 33 to 56 (RDPKQTRAMPQIGGSGERKPRPQL) are disordered. The segment at 60-114 (LKCPRCDSNNTKFCYYNNYSMSQPRYFCKACRRYWTHGGTLRNVPIGGGCRKNKH) adopts a Dof-type zinc-finger fold. Zn(2+)-binding residues include cysteine 62, cysteine 65, cysteine 87, and cysteine 90. 2 disordered regions span residues 124–144 (TSSSSSATYAPLSPSTNASSS) and 306–328 (WNKHNNNNNNNNNNNNNNNNKGQ).

Interacts with the bZIP transcription factor Opaque-2/O2. In terms of tissue distribution, seed endosperm.

It localises to the nucleus. Its function is as follows. Transcription factor that binds specifically to a 5'-AA[AG]G-3' consensus core sequence. May enhance the DNA binding of the bZIP transcription factor Opaque-2 to O2 binding site elements. The protein is Dof zinc finger protein PBF (PBF) of Zea mays (Maize).